Reading from the N-terminus, the 496-residue chain is Hexokinase-1 (496 aa).

Residues 4–24 (VAVGATVVCTAAVCAVAVLVV) form a helical membrane-spanning segment. Positions 35-487 (GRVLAILKAF…SGIGAALLAA (453 aa)) constitute a Hexokinase domain. The hexokinase small subdomain stretch occupies residues 90 to 228 (SGDEKGLFYA…GLDMRIAALV (139 aa)). ADP is bound by residues glycine 104, threonine 105, and asparagine 106. The D-glucose site is built by threonine 194, lysine 195, asparagine 229, and aspartate 230. Positions 229–476 (NDTVGTLAGG…GSVEVTHSND (248 aa)) are hexokinase large subdomain. Residue threonine 253 participates in ADP binding. Positions 256, 284, and 315 each coordinate D-glucose. An ADP-binding site is contributed by glycine 441.

This sequence belongs to the hexokinase family. Interacts with RPT5B in nucleus. Interacts with RHIP1. Interacts with KING1 in mitochondria. Interacts with CLF (via SANT domain) and EZA1/SWN (via SANT domain) in nucleus. As to expression, highly expressed in flowers and siliques, at intermediate levels in roots and stems, and at lower levels in rosette and cauline leaves.

It is found in the mitochondrion outer membrane. The protein resides in the nucleus. The catalysed reaction is a D-hexose + ATP = a D-hexose 6-phosphate + ADP + H(+). It catalyses the reaction D-fructose + ATP = D-fructose 6-phosphate + ADP + H(+). It carries out the reaction D-glucose + ATP = D-glucose 6-phosphate + ADP + H(+). It participates in carbohydrate metabolism; hexose metabolism. It functions in the pathway carbohydrate degradation; glycolysis; D-glyceraldehyde 3-phosphate and glycerone phosphate from D-glucose: step 1/4. In terms of biological role, fructose and glucose phosphorylating enzyme. May be involved in the phosphorylation of glucose during the export from mitochondrion to cytosol. Acts as a sugar sensor which may regulate sugar-dependent gene repression or activation. Mediates the effects of sugar on plant growth and development independently of its catalytic activity or the sugar metabolism. May regulate the execution of program cell death in plant cells. Promotes roots and leaves growth. Together with sugar, is involved in the regulation of the expression of aquaporin genes, and reduces leaf water conductance, to coordinate sugar levels with the loss of water through transpiration. Regulates cell proliferation and expansion early during leaf development. Involved in sucrose-induced leaf growth stimulation independently of GPT2. May participate to the stimulation of hypocotyl elongation under long-day (LD) conditions. Forms a nuclear complex with CLF and EZA1/SWN to target common glucose-responsive genes and regulate glucose signaling. Is required for CLF- and EZA1/SWN-mediated histone H3 trimethylation on 'Lys-27' (H3K27me3) and glucose-mediated gene repression. This is Hexokinase-1 from Arabidopsis thaliana (Mouse-ear cress).